The following is a 144-amino-acid chain: Maximins z/Hv (144 aa).

Residues 1-18 (MNFKYIVAVSFLIASGYA) form the signal peptide. A propeptide spanning residues 19–43 (RSEENDVQSLSQREVLEEESLREIR) is cleaved from the precursor. Asn-70 is subject to Asparagine amide. The propeptide occupies 74 to 123 (TAEDHEVMKRLKAVMRDLDSLDHPEEASERETRGFNQEEIANLFTKKEKR). Ile-143 is modified (isoleucine amide).

This sequence belongs to the bombinin family. In terms of tissue distribution, expressed by the skin glands.

The protein resides in the secreted. Maximin-z shows antimicrobial activity against bacteria and against the fungus C.albicans. It has little hemolytic activity. In terms of biological role, maximin-Hv shows antimicrobial activity against bacteria and against the fungus C.albicans. Shows strong hemolytic activity. The sequence is that of Maximins z/Hv from Bombina maxima (Giant fire-bellied toad).